We begin with the raw amino-acid sequence, 86 residues long: Small ribosomal subunit protein uS15 (86 aa).

Residues 1–10 (MSIDTQSIIE) are compositionally biased toward polar residues. The disordered stretch occupies residues 1–21 (MSIDTQSIIENNKRSAHDTGS).

The protein belongs to the universal ribosomal protein uS15 family. As to quaternary structure, part of the 30S ribosomal subunit. Forms a bridge to the 50S subunit in the 70S ribosome, contacting the 23S rRNA.

In terms of biological role, one of the primary rRNA binding proteins, it binds directly to 16S rRNA where it helps nucleate assembly of the platform of the 30S subunit by binding and bridging several RNA helices of the 16S rRNA. Its function is as follows. Forms an intersubunit bridge (bridge B4) with the 23S rRNA of the 50S subunit in the ribosome. The protein is Small ribosomal subunit protein uS15 of Xylella fastidiosa (strain 9a5c).